The chain runs to 140 residues: 3-hydroxyacyl-[acyl-carrier-protein] dehydratase FabZ (140 aa).

Histidine 47 is an active-site residue.

This sequence belongs to the thioester dehydratase family. FabZ subfamily.

The protein localises to the cytoplasm. It catalyses the reaction a (3R)-hydroxyacyl-[ACP] = a (2E)-enoyl-[ACP] + H2O. Involved in unsaturated fatty acids biosynthesis. Catalyzes the dehydration of short chain beta-hydroxyacyl-ACPs and long chain saturated and unsaturated beta-hydroxyacyl-ACPs. In Streptococcus equi subsp. equi (strain 4047), this protein is 3-hydroxyacyl-[acyl-carrier-protein] dehydratase FabZ.